The primary structure comprises 191 residues: UPF0669 protein C6orf120 homolog (191 aa).

Positions 1–30 (MAAPRGRAAPWTTALLLLLTSQILSPGSCA) are cleaved as a signal peptide. Residue asparagine 53 is glycosylated (N-linked (GlcNAc...) asparagine).

This sequence belongs to the UPF0669 family.

The protein localises to the secreted. Functionally, may be involved in induction of apoptosis in CD4(+) T-cells, but not CD8(+) T-cells or hepatocytes. The protein is UPF0669 protein C6orf120 homolog of Macaca fascicularis (Crab-eating macaque).